The following is a 130-amino-acid chain: UPF0212 protein TSIB_1358 (130 aa).

The protein belongs to the UPF0212 family.

The chain is UPF0212 protein TSIB_1358 from Thermococcus sibiricus (strain DSM 12597 / MM 739).